A 33-amino-acid chain; its full sequence is Dolabellanin-B2 (33 aa).

Post-translationally, contains two disulfide bonds. Up to two of the methionines may be oxidized to methionine sulfoxides.

It localises to the secreted. Has antibacterial activity against Gram-negative bacteria E.coli JM109 and DH5-alpha, H.influenza IID 983, and V.vulnificus RIMD 2219009. Has antibacterial activity against Gram-positive bacteria S.aureus IID 1677, B.subtilis RIMD 0225014 and L.monocytogenes VIU206. Possesses antifungal activity against S.cerevisiae A581A, S.pombe IFO 1628, C.albicans ATCC 36232 and TIMM-1623, and C.tropicalis TIMM-0313. The polypeptide is Dolabellanin-B2 (Dolabella auricularia (Shoulderblade sea cat)).